The sequence spans 1367 residues: Collagen alpha-1(XV) chain (1367 aa).

The signal sequence occupies residues M1–A31. In terms of domain architecture, Laminin G-like spans S54–F249. Residues R229–R604 form a nonhelical region 1 (NC1) region. O-linked (Xyl...) (chondroitin sulfate) serine glycans are attached at residues S243 and S247. Positions A267 to G319 are disordered. 2 N-linked (GlcNAc...) asparagine glycosylation sites follow: N305 and N323. O-linked (Xyl...) (chondroitin sulfate) serine glycosylation occurs at S341. N-linked (GlcNAc...) asparagine glycans are attached at residues N348, N375, and N402. 2 disordered regions span residues D396–E446 and T529–E784. Polar residues predominate over residues N402–G429. The span at K434–E446 shows a compositional bias: basic and acidic residues. Over residues P555–T564 the composition is skewed to pro residues. Residues G582 to D595 show a composition bias toward gly residues. Collagen-like domains are found at residues G605–G665 and E666–P717. The tract at residues G605 to G718 is triple-helical region 1 (COL1). Residues P606–P616 are compositionally biased toward pro residues. N673 carries N-linked (GlcNAc...) asparagine glycosylation. Positions M703–P717 are enriched in pro residues. The segment at C719–S748 is nonhelical region 2 (NC2). Residue S730 is glycosylated (O-linked (Xyl...) (chondroitin sulfate) serine). Over residues S737–P750 the composition is skewed to low complexity. The interval G749–V783 is triple-helical region 2 (COL2). Residues K751–A765 are compositionally biased toward basic and acidic residues. The interval E784–M807 is nonhelical region 3 (NC3). N-linked (GlcNAc...) asparagine glycans are attached at residues N792, N795, and N799. Collagen-like domains follow at residues G808–G850 and K863–G912. A triple-helical region 3 (COL3) region spans residues G808–I852. Residues L853–K863 form a nonhelical region 4 (NC4) region. Residues G864–V934 are triple-helical region 4 (COL4). The interval K905–P930 is disordered. A compositionally biased stretch (pro residues) spans P916 to P930. Residues V935–H968 form a nonhelical region 5 (NC5) region. A triple-helical region 5 (COL5) region spans residues G969–P998. Disordered regions lie at residues K974 to D1000 and G1055 to L1089. Residues V999–S1031 are nonhelical region 6 (NC6). Residues G1032–P1086 are triple-helical region 6 (COL6). Residues G1055–P1086 are compositionally biased toward pro residues. Residues A1087–P1096 form a nonhelical region 7 (NC7) region. The segment at G1097–R1111 is triple-helical region 7 (COL7). The nonhelical region 8 (NC8) stretch occupies residues N1112–K1367. Cystine bridges form between C1216–C1356 and C1318–C1348.

It belongs to the multiplexin collagen family. As to quaternary structure, trimer; disulfide-linked. In terms of assembly, interacts moderately with EFEMP2. In terms of processing, prolines at the third position of the tripeptide repeating unit (G-X-Y) are hydroxylated in some or all of the chains. Post-translationally, O-glycosylated; contains chondroitin sulfate. Detected in testis, brain, heart, kidney, skeletal muscle and skin (at protein level). Detected in heart and skeletal muscle.

Its subcellular location is the secreted. The protein localises to the extracellular space. The protein resides in the extracellular matrix. Its function is as follows. Structural protein that stabilizes microvessels and muscle cells, both in heart and in skeletal muscle. Restin potently inhibits angiogenesis. This Mus musculus (Mouse) protein is Collagen alpha-1(XV) chain (Col15a1).